A 73-amino-acid chain; its full sequence is MVEIQTGLRENTVGAVEQFAEIASIDPLVASMILSGAIIITVAVVAFGALTLGAIGASIKRGLSGSEEPNQPA.

A helical membrane pass occupies residues 37–57; sequence AIIITVAVVAFGALTLGAIGA.

It is found in the membrane. This is an uncharacterized protein from Natronomonas pharaonis (strain ATCC 35678 / DSM 2160 / CIP 103997 / JCM 8858 / NBRC 14720 / NCIMB 2260 / Gabara) (Halobacterium pharaonis).